A 250-amino-acid polypeptide reads, in one-letter code: Probable transcriptional regulatory protein SACE_2018 (250 aa).

Belongs to the TACO1 family.

It is found in the cytoplasm. In Saccharopolyspora erythraea (strain ATCC 11635 / DSM 40517 / JCM 4748 / NBRC 13426 / NCIMB 8594 / NRRL 2338), this protein is Probable transcriptional regulatory protein SACE_2018.